Consider the following 175-residue polypeptide: uncharacterized protein (175 aa).

The next 5 helical transmembrane spans lie at 25 to 45 (MIAIGGTIGTGLFLGAGTTIS), 46 to 66 (ATGPSVIFIYAIMGLFFFFLL), 97 to 117 (FAGWTYWIGILFACMAELTAV), 124 to 144 (WLPGLPAWLIEVSVLGLLTLL), and 155 to 175 (TEFWFAMIKIIAIISLVVTGI).

It belongs to the amino acid-polyamine-organocation (APC) superfamily.

It localises to the cell membrane. This is an uncharacterized protein from Lactobacillus delbrueckii subsp. lactis.